A 453-amino-acid polypeptide reads, in one-letter code: tRNA modification GTPase MnmE (453 aa).

Residues Arg28, Glu90, and Arg129 each contribute to the (6S)-5-formyl-5,6,7,8-tetrahydrofolate site. The TrmE-type G domain occupies 224–375 (GLRVAIIGRP…LSSALLKLCG (152 aa)). Asn234 contacts K(+). GTP-binding positions include 234–239 (NVGKSS), 253–259 (TDLPGTT), 278–281 (DTAG), and 356–358 (SAR). Ser238 is a Mg(2+) binding site. Residues Thr253, Leu255, and Thr258 each contribute to the K(+) site. Residue Thr259 coordinates Mg(2+). Lys453 contacts (6S)-5-formyl-5,6,7,8-tetrahydrofolate.

Belongs to the TRAFAC class TrmE-Era-EngA-EngB-Septin-like GTPase superfamily. TrmE GTPase family. As to quaternary structure, homodimer. Heterotetramer of two MnmE and two MnmG subunits. K(+) serves as cofactor.

The protein resides in the cytoplasm. In terms of biological role, exhibits a very high intrinsic GTPase hydrolysis rate. Involved in the addition of a carboxymethylaminomethyl (cmnm) group at the wobble position (U34) of certain tRNAs, forming tRNA-cmnm(5)s(2)U34. The chain is tRNA modification GTPase MnmE from Synechococcus sp. (strain RCC307).